A 519-amino-acid polypeptide reads, in one-letter code: Transketolase, chloroplastic (519 aa).

Mg(2+) is bound at residue Asp11. Thiamine diphosphate contacts are provided by Gly12 and Asn41. Asn41 and Ile43 together coordinate Mg(2+). His118 lines the thiamine diphosphate pocket. 3 residues coordinate substrate: His118, Arg212, and Ser239. 2 residues coordinate thiamine diphosphate: Glu266 and Phe293. Glu266 acts as the Proton donor in catalysis. Positions 317, 325, and 376 each coordinate substrate.

Belongs to the transketolase family. In terms of assembly, homodimer. Mg(2+) is required as a cofactor. Requires Ca(2+) as cofactor. It depends on Mn(2+) as a cofactor. Co(2+) serves as cofactor. The cofactor is thiamine diphosphate. As to expression, constitutively expressed in leaves and roots.

The protein localises to the plastid. Its subcellular location is the chloroplast. The catalysed reaction is D-sedoheptulose 7-phosphate + D-glyceraldehyde 3-phosphate = aldehydo-D-ribose 5-phosphate + D-xylulose 5-phosphate. Its function is as follows. Catalyzes the transfer of a two-carbon ketol group from a ketose donor to an aldose acceptor, via a covalent intermediate with the cofactor thiamine pyrophosphate. This chain is Transketolase, chloroplastic (TKT3), found in Craterostigma plantagineum (Blue gem).